The primary structure comprises 205 residues: MILLVGLGNPGEKYARNRHNIGFMAADGIVRRHSFSPPRARFQGIVSEGTLDGEKVIVLKPTTYMNESGRAVGEAMRFYKLTPADVVVFYDELDLEPGKVRMKTGGGAAGHNGIRSIAAHIGPEFRRVRIGIGHPGAKDRVLGYVLGDFSKAETADWVETLIEAIADAAPLLATGKDATFANKVHLALNPEPEKKPKTKEKDGDE.

Residue Tyr-14 coordinates tRNA. The active-site Proton acceptor is His-19. Residues Tyr-64, Asn-66, and Asn-112 each contribute to the tRNA site.

The protein belongs to the PTH family. In terms of assembly, monomer.

It localises to the cytoplasm. The catalysed reaction is an N-acyl-L-alpha-aminoacyl-tRNA + H2O = an N-acyl-L-amino acid + a tRNA + H(+). Functionally, hydrolyzes ribosome-free peptidyl-tRNAs (with 1 or more amino acids incorporated), which drop off the ribosome during protein synthesis, or as a result of ribosome stalling. In terms of biological role, catalyzes the release of premature peptidyl moieties from peptidyl-tRNA molecules trapped in stalled 50S ribosomal subunits, and thus maintains levels of free tRNAs and 50S ribosomes. This is Peptidyl-tRNA hydrolase from Parvibaculum lavamentivorans (strain DS-1 / DSM 13023 / NCIMB 13966).